Consider the following 133-residue polypeptide: Large ribosomal subunit protein bL19 (133 aa).

Residues 114–133 (IAERQMTAASKEEPAEKSEA) form a disordered region. Positions 123–133 (SKEEPAEKSEA) are enriched in basic and acidic residues.

This sequence belongs to the bacterial ribosomal protein bL19 family.

In terms of biological role, this protein is located at the 30S-50S ribosomal subunit interface and may play a role in the structure and function of the aminoacyl-tRNA binding site. The protein is Large ribosomal subunit protein bL19 of Phenylobacterium zucineum (strain HLK1).